The sequence spans 290 residues: Light-independent protochlorophyllide reductase iron-sulfur ATP-binding protein (290 aa).

Residues 10–15 (GIGKST) and Lys39 contribute to the ATP site. A Mg(2+)-binding site is contributed by Ser14. Cys95 and Cys129 together coordinate [4Fe-4S] cluster. 180–181 (NR) serves as a coordination point for ATP.

This sequence belongs to the NifH/BchL/ChlL family. As to quaternary structure, homodimer. Protochlorophyllide reductase is composed of three subunits; ChlL, ChlN and ChlB. [4Fe-4S] cluster serves as cofactor.

It localises to the plastid. Its subcellular location is the chloroplast. The catalysed reaction is chlorophyllide a + oxidized 2[4Fe-4S]-[ferredoxin] + 2 ADP + 2 phosphate = protochlorophyllide a + reduced 2[4Fe-4S]-[ferredoxin] + 2 ATP + 2 H2O. It participates in porphyrin-containing compound metabolism; chlorophyll biosynthesis (light-independent). Functionally, component of the dark-operative protochlorophyllide reductase (DPOR) that uses Mg-ATP and reduced ferredoxin to reduce ring D of protochlorophyllide (Pchlide) to form chlorophyllide a (Chlide). This reaction is light-independent. The L component serves as a unique electron donor to the NB-component of the complex, and binds Mg-ATP. This chain is Light-independent protochlorophyllide reductase iron-sulfur ATP-binding protein, found in Cycas taitungensis (Prince sago).